Reading from the N-terminus, the 387-residue chain is O-methyltransferase lepI (387 aa).

135-148 contacts substrate; it reads FENLWPVLMALPDF. Residues 175–195 form a substrate binding region; sequence CFHWLATQPTRIANFKVLLTD. S-adenosyl-L-methionine contacts are provided by residues 227–228, Asp252, 275–276, and Arg291; these read GG and NF.

Belongs to the class I-like SAM-binding methyltransferase superfamily. Cation-independent O-methyltransferase family.

O-methyltransferase; part of the gene cluster 23 that mediates the biosynthesis of a family of 2-pyridones known as leporins. The hybrid PKS-NRPS synthetase lepA and the enoyl reductase lepG are responsible for fusion of phenylalanine with a hexaketide and subsequent release of the stable tetramic acid precursor, pre-leporin C. Because lepA lacks a designated enoylreductase (ER) domain, the required activity is provided the enoyl reductase lepG. It is possible that the dehydrogenase lepF also participates in production of pre-leporin C. Cytochrome P450 monooxygenase lepH is then required for the ring expansion step to yield leporin C. Leporin C is then presumably further oxidized by the N-hydroxylase lepD to form leporin B. LepI may possess a function in biosynthesis upstream of lepA. Leporin B is further oxidized in the presence of ferric ion to give the leporin B trimer-iron chelate, but whether or not this reaction is catalyzed by an enzyme in the pathway or by ferric ion is not determined yet. This Aspergillus flavus (strain ATCC 200026 / FGSC A1120 / IAM 13836 / NRRL 3357 / JCM 12722 / SRRC 167) protein is O-methyltransferase lepI.